We begin with the raw amino-acid sequence, 351 residues long: Uroporphyrinogen decarboxylase (351 aa).

Residues 25-29 (RQAGR), Asp74, Tyr151, Ser206, and His325 each bind substrate.

Belongs to the uroporphyrinogen decarboxylase family. In terms of assembly, homodimer.

It is found in the cytoplasm. It catalyses the reaction uroporphyrinogen III + 4 H(+) = coproporphyrinogen III + 4 CO2. It functions in the pathway porphyrin-containing compound metabolism; protoporphyrin-IX biosynthesis; coproporphyrinogen-III from 5-aminolevulinate: step 4/4. Its function is as follows. Catalyzes the decarboxylation of four acetate groups of uroporphyrinogen-III to yield coproporphyrinogen-III. The protein is Uroporphyrinogen decarboxylase of Chlorobium limicola (strain DSM 245 / NBRC 103803 / 6330).